The primary structure comprises 774 residues: Protein translocase subunit SecA 2 (774 aa).

ATP is bound by residues Gln94, 112–116 (GEGKT), and Asp501.

It belongs to the SecA family. As to quaternary structure, monomer and homodimer. Part of the essential Sec protein translocation apparatus which comprises SecA, SecYEG and auxiliary proteins SecDF. Other proteins may also be involved.

It localises to the cell membrane. The protein resides in the cytoplasm. It catalyses the reaction ATP + H2O + cellular proteinSide 1 = ADP + phosphate + cellular proteinSide 2.. In terms of biological role, part of the Sec protein translocase complex. Interacts with the SecYEG preprotein conducting channel. Has a central role in coupling the hydrolysis of ATP to the transfer of proteins into and across the cell membrane, serving as an ATP-driven molecular motor driving the stepwise translocation of polypeptide chains across the membrane. The polypeptide is Protein translocase subunit SecA 2 (Mycobacterium sp. (strain JLS)).